Consider the following 356-residue polypeptide: Tyrosine recombinase XerS (356 aa).

A Core-binding (CB) domain is found at 16–121 (LMPWYVLEYY…ALSSLYKYLT (106 aa)). Positions 169–354 (GFLTYIDQEH…VNDEQKNALD (186 aa)) constitute a Tyr recombinase domain. Residues Arg210, Lys234, His306, Arg309, and His332 contribute to the active site. Residue Tyr341 is the O-(3'-phospho-DNA)-tyrosine intermediate of the active site.

The protein belongs to the 'phage' integrase family. XerS subfamily.

It localises to the cytoplasm. Its activity is regulated as follows. FtsK is required for recombination. Its function is as follows. Site-specific tyrosine recombinase, which acts by catalyzing the cutting and rejoining of the recombining DNA molecules. Essential to convert dimers of the bacterial chromosome into monomers to permit their segregation at cell division. This Streptococcus pneumoniae serotype 2 (strain D39 / NCTC 7466) protein is Tyrosine recombinase XerS.